A 62-amino-acid polypeptide reads, in one-letter code: Bowman-Birk type proteinase inhibitor (62 aa).

Disulfide bonds link C8–C61, C9–C24, C12–C57, C14–C22, C31–C38, C35–C50, and C40–C48.

Forms a monomer at protein concentrations of below 1 mM. At concentrations of above 2 mM, self-associates.

Functionally, inhibits trypsin but not chymotrypsin. Inhibits the trypsin-like proteinase activity present in larvae of the crop pests Adoxophyes orana, Hyphantria cunea, Lobesia botrana and Ostrinia nubilalis. This is Bowman-Birk type proteinase inhibitor from Medicago scutellata (Snail medic).